The sequence spans 971 residues: Exportin-2 (971 aa).

An N-acetylmethionine modification is found at Met-1. Residues Ala-29–Ser-102 form the Importin N-terminal domain. Residue Ser-112 is modified to Phosphoserine. N6-acetyllysine occurs at positions 574 and 824. At Ser-931 the chain carries Phosphoserine.

This sequence belongs to the XPO2/CSE1 family. Found in a complex with CSE1L/XPO2, Ran and KPNA2. Binds with high affinity to importin-alpha only in the presence of RanGTP. The complex is dissociated by the combined action of RanBP1 and RanGAP1. Interacts with CFTR. Ubiquitous. Detected in embryos from 5 to 17 dpc. Highly expressed in adult testis, heart, brain, lung, liver, skeletal muscle, spleen and kidney.

It localises to the cytoplasm. Its subcellular location is the nucleus. Export receptor for importin-alpha. Mediates importin-alpha re-export from the nucleus to the cytoplasm after import substrates (cargos) have been released into the nucleoplasm. In the nucleus binds cooperatively to importin-alpha and to the GTPase Ran in its active GTP-bound form. Docking of this trimeric complex to the nuclear pore complex (NPC) is mediated through binding to nucleoporins. Upon transit of a nuclear export complex into the cytoplasm, disassembling of the complex and hydrolysis of Ran-GTP to Ran-GDP (induced by RANBP1 and RANGAP1, respectively) cause release of the importin-alpha from the export receptor. CSE1L/XPO2 then return to the nuclear compartment and mediate another round of transport. The directionality of nuclear export is thought to be conferred by an asymmetric distribution of the GTP- and GDP-bound forms of Ran between the cytoplasm and nucleus. The polypeptide is Exportin-2 (Cse1l) (Mus musculus (Mouse)).